The chain runs to 349 residues: MHQSLTQQRSSDMSLPDSMGAFNRRKRNSIYVTVTLLIVSVLILTVGLAATTRTQNVTVGGYYPGVILGFGSFLGIIGSNLIENKRQMLVASIVFISFGVIAAFCCAIVDGVFAARHIDLKPLYANRCHYVPKTSQKEAEEVISSSTKNSPSTRVMRNLTQAAREVNCPHLSREFCTPRIRGNTCFCCDLYNCGNRVEITGGYYEYIDVSSCQDIIHLYHLLWSATILNIVGLFLGIITAAVLGGFKDMNPTLPAMNCSVENTHPTVSYYAHPQVTSYNTYYHSPPHLPPYSAYDFQHSSVFPSSPPSGLSDEPQSASPSPSYMWSSSAPPRYSPPYYPPFEKPPPYSP.

A run of 4 helical transmembrane segments spans residues 30–50, 57–77, 89–109, and 226–246; these read IYVT…GLAA, VTVG…LGII, LVAS…CAIV, and TILN…LGGF. Residues 301 to 329 are disordered; it reads VFPSSPPSGLSDEPQSASPSPSYMWSSSA. Positions 316–329 are enriched in low complexity; the sequence is SASPSPSYMWSSSA.

The protein belongs to the TMEM255 family.

The protein resides in the membrane. The chain is Transmembrane protein 255A (TMEM255A) from Macaca fascicularis (Crab-eating macaque).